The sequence spans 361 residues: tRNA/tmRNA (uracil-C(5))-methyltransferase (361 aa).

S-adenosyl-L-methionine is bound by residues Q183, Y211, N216, E232, and D294. C319 (nucleophile) is an active-site residue. E353 functions as the Proton acceptor in the catalytic mechanism.

Belongs to the class I-like SAM-binding methyltransferase superfamily. RNA M5U methyltransferase family. TrmA subfamily.

The enzyme catalyses uridine(54) in tRNA + S-adenosyl-L-methionine = 5-methyluridine(54) in tRNA + S-adenosyl-L-homocysteine + H(+). The catalysed reaction is uridine(341) in tmRNA + S-adenosyl-L-methionine = 5-methyluridine(341) in tmRNA + S-adenosyl-L-homocysteine + H(+). In terms of biological role, dual-specificity methyltransferase that catalyzes the formation of 5-methyluridine at position 54 (m5U54) in all tRNAs, and that of position 341 (m5U341) in tmRNA (transfer-mRNA). The chain is tRNA/tmRNA (uracil-C(5))-methyltransferase from Acinetobacter baumannii (strain ACICU).